The sequence spans 487 residues: Probable cobyric acid synthase (487 aa).

The GATase cobBQ-type domain maps to 246 to 431 (LVRIAVIRLP…LHGLFMVPAA (186 aa)). Cys-325 functions as the Nucleophile in the catalytic mechanism. Residue His-423 is part of the active site.

This sequence belongs to the CobB/CobQ family. CobQ subfamily.

It functions in the pathway cofactor biosynthesis; adenosylcobalamin biosynthesis. Catalyzes amidations at positions B, D, E, and G on adenosylcobyrinic A,C-diamide. NH(2) groups are provided by glutamine, and one molecule of ATP is hydrogenolyzed for each amidation. The sequence is that of Probable cobyric acid synthase from Methanosphaerula palustris (strain ATCC BAA-1556 / DSM 19958 / E1-9c).